A 162-amino-acid polypeptide reads, in one-letter code: G/U mismatch-specific DNA glycosylase (162 aa).

This sequence belongs to the uracil-DNA glycosylase (UDG) superfamily. TDG/mug family. As to quaternary structure, binds DNA as a monomer.

It localises to the cytoplasm. It carries out the reaction Specifically hydrolyzes mismatched double-stranded DNA and polynucleotides, releasing free uracil.. Its function is as follows. Excises ethenocytosine and uracil, which can arise by alkylation or deamination of cytosine, respectively, from the corresponding mispairs with guanine in ds-DNA. It is capable of hydrolyzing the carbon-nitrogen bond between the sugar-phosphate backbone of the DNA and the mispaired base. The complementary strand guanine functions in substrate recognition. Required for DNA damage lesion repair in stationary-phase cells. The sequence is that of G/U mismatch-specific DNA glycosylase from Serratia marcescens.